The following is a 739-amino-acid chain: Probable beta-glucosidase L (739 aa).

A signal peptide spans 1–17; that stretch reads MQNLFLSLLAAAVTVHA. Asn-224 carries an N-linked (GlcNAc...) asparagine glycan. Residue Asp-252 is part of the active site. N-linked (GlcNAc...) asparagine glycosylation occurs at Asn-398.

The protein belongs to the glycosyl hydrolase 3 family.

It is found in the secreted. It carries out the reaction Hydrolysis of terminal, non-reducing beta-D-glucosyl residues with release of beta-D-glucose.. Its pathway is glycan metabolism; cellulose degradation. Beta-glucosidases are one of a number of cellulolytic enzymes involved in the degradation of cellulosic biomass. Catalyzes the last step releasing glucose from the inhibitory cellobiose. The chain is Probable beta-glucosidase L (bglL) from Neosartorya fischeri (strain ATCC 1020 / DSM 3700 / CBS 544.65 / FGSC A1164 / JCM 1740 / NRRL 181 / WB 181) (Aspergillus fischerianus).